The sequence spans 142 residues: MKTFSAKPHEVKRDWFVVDATDKVLGRLAAEIARRLRGKHKPEYTPHVDTGDYIVVVNADKLRVTGNKALDKKYYRHSGYPGGIYERTFTELQNEFPERVLEKAVKGMLPKGPLGYAMIKKLKVYAGAEHPHTAQQPKALEI.

It belongs to the universal ribosomal protein uL13 family. As to quaternary structure, part of the 50S ribosomal subunit.

Functionally, this protein is one of the early assembly proteins of the 50S ribosomal subunit, although it is not seen to bind rRNA by itself. It is important during the early stages of 50S assembly. The polypeptide is Large ribosomal subunit protein uL13 (Laribacter hongkongensis (strain HLHK9)).